We begin with the raw amino-acid sequence, 270 residues long: Undecaprenyl-diphosphatase 1 (270 aa).

6 helical membrane-spanning segments follow: residues 41 to 61 (IEGF…VLLV), 88 to 108 (FRFI…GVLF), 117 to 137 (KDGV…LFLI), 192 to 212 (FSFL…ITDI), 218 to 238 (LGEL…ATYF), and 250 to 270 (GNLV…LIFA).

It belongs to the UppP family.

The protein localises to the cell membrane. The enzyme catalyses di-trans,octa-cis-undecaprenyl diphosphate + H2O = di-trans,octa-cis-undecaprenyl phosphate + phosphate + H(+). Functionally, catalyzes the dephosphorylation of undecaprenyl diphosphate (UPP). Confers resistance to bacitracin. The sequence is that of Undecaprenyl-diphosphatase 1 from Bacillus licheniformis (strain ATCC 14580 / DSM 13 / JCM 2505 / CCUG 7422 / NBRC 12200 / NCIMB 9375 / NCTC 10341 / NRRL NRS-1264 / Gibson 46).